A 131-amino-acid polypeptide reads, in one-letter code: Large ribosomal subunit protein bL19 (131 aa).

The protein belongs to the bacterial ribosomal protein bL19 family.

In terms of biological role, this protein is located at the 30S-50S ribosomal subunit interface and may play a role in the structure and function of the aminoacyl-tRNA binding site. The chain is Large ribosomal subunit protein bL19 from Rhodopseudomonas palustris (strain BisA53).